A 238-amino-acid polypeptide reads, in one-letter code: Ribonuclease 3 (238 aa).

One can recognise an RNase III domain in the interval 9–141; that stretch reads LIDFMEKIGY…VVAAVYIDGG (133 aa). Glutamate 54 is a Mg(2+) binding site. Aspartate 58 is a catalytic residue. Mg(2+)-binding residues include aspartate 127 and glutamate 130. Residue glutamate 130 is part of the active site. A DRBM domain is found at 168-237; it reads DYKTSLQEIT…ARRAIEKLKG (70 aa).

Belongs to the ribonuclease III family. Homodimer. The cofactor is Mg(2+).

The protein resides in the cytoplasm. It carries out the reaction Endonucleolytic cleavage to 5'-phosphomonoester.. Functionally, digests double-stranded RNA. Involved in the processing of primary rRNA transcript to yield the immediate precursors to the large and small rRNAs (23S and 16S). Processes some mRNAs, and tRNAs when they are encoded in the rRNA operon. Processes pre-crRNA and tracrRNA of type II CRISPR loci if present in the organism. This Pseudothermotoga lettingae (strain ATCC BAA-301 / DSM 14385 / NBRC 107922 / TMO) (Thermotoga lettingae) protein is Ribonuclease 3.